Here is a 340-residue protein sequence, read N- to C-terminus: Ketol-acid reductoisomerase (NADP(+)) (340 aa).

The KARI N-terminal Rossmann domain occupies 3-183 (VNIYYDKDCD…GGGRTGIIET (181 aa)). NADP(+)-binding positions include 26–29 (FGSQ), S54, and 84–87 (DELQ). The active site involves H109. G135 serves as a coordination point for NADP(+). The KARI C-terminal knotted domain occupies 184–329 (TFKDETETDL…KKLRAMMPWI (146 aa)). Mg(2+) contacts are provided by D192, E196, E228, and E232. S253 contacts substrate.

The protein belongs to the ketol-acid reductoisomerase family. Requires Mg(2+) as cofactor.

It catalyses the reaction (2R)-2,3-dihydroxy-3-methylbutanoate + NADP(+) = (2S)-2-acetolactate + NADPH + H(+). The enzyme catalyses (2R,3R)-2,3-dihydroxy-3-methylpentanoate + NADP(+) = (S)-2-ethyl-2-hydroxy-3-oxobutanoate + NADPH + H(+). It functions in the pathway amino-acid biosynthesis; L-isoleucine biosynthesis; L-isoleucine from 2-oxobutanoate: step 2/4. Its pathway is amino-acid biosynthesis; L-valine biosynthesis; L-valine from pyruvate: step 2/4. Its function is as follows. Involved in the biosynthesis of branched-chain amino acids (BCAA). Catalyzes an alkyl-migration followed by a ketol-acid reduction of (S)-2-acetolactate (S2AL) to yield (R)-2,3-dihydroxy-isovalerate. In the isomerase reaction, S2AL is rearranged via a Mg-dependent methyl migration to produce 3-hydroxy-3-methyl-2-ketobutyrate (HMKB). In the reductase reaction, this 2-ketoacid undergoes a metal-dependent reduction by NADPH to yield (R)-2,3-dihydroxy-isovalerate. The sequence is that of Ketol-acid reductoisomerase (NADP(+)) from Campylobacter curvus (strain 525.92).